The chain runs to 484 residues: Putative sodium/proton-dependent alanine carrier protein YrbD (484 aa).

11 helical membrane-spanning segments follow: residues 11–31 (VLWSTPVIYILLGIGFAFSIM), 66–88 (ALSGRVGTGNIAGVATAIAFGGP), 92–114 (FWMWAIAFIGAASAFVESTLAQI), 139–159 (WFAVLFAAAALIAMAFLMPGV), 172–192 (FGISPFVTGCGLVLLLGFIIF), 205–225 (IVPFMAIGYILLSLIIIVMNV), 238–258 (SAFALDSAFGGLIGMAISWGV), 292–312 (AFSVYIDTLFVCSATAFMILF), 350–370 (GFGAGFVAIALFFFAFTTIMA), 390–410 (WAMLGLKLIILAATFYGTVKT), and 416–436 (ALGDAGLGIMVWLNVIAIVLL).

This sequence belongs to the alanine or glycine:cation symporter (AGCS) (TC 2.A.25) family.

It localises to the cell membrane. This is Putative sodium/proton-dependent alanine carrier protein YrbD (yrbD) from Bacillus subtilis (strain 168).